Consider the following 469-residue polypeptide: Serine/threonine-protein kinase orb6 (469 aa).

The region spanning 93 to 392 (FSTIKVIGKG…AIEIMQHPFF (300 aa)) is the Protein kinase domain. ATP is bound by residues 99–107 (IGKGAFGEV) and Lys-122. Residue Asp-216 is the Proton acceptor of the active site. The region spanning 393 to 467 (TGIDWDHIRE…KKFNYLTMKG (75 aa)) is the AGC-kinase C-terminal domain.

Belongs to the protein kinase superfamily. Ser/Thr protein kinase family. In terms of assembly, interacts with mob2.

It catalyses the reaction L-seryl-[protein] + ATP = O-phospho-L-seryl-[protein] + ADP + H(+). The enzyme catalyses L-threonyl-[protein] + ATP = O-phospho-L-threonyl-[protein] + ADP + H(+). Interacts with pak1/shk1 and coordinates cell morphogenesis with the cell cycle. It is essential for maintenance of cell polarity and is involved in mitotic control. The protein is Serine/threonine-protein kinase orb6 (orb6) of Schizosaccharomyces pombe (strain 972 / ATCC 24843) (Fission yeast).